The chain runs to 137 residues: Seminal plasma sperm motility inhibitor (137 aa).

A signal peptide spans 1-21 (MKLGSAIPWALLLSTXTLVST). A disulfide bridge connects residues Cys30 and Cys51. Residues 30 to 131 (CGGFLKNYSG…SSFNVYFYGI (102 aa)) form the CUB domain. N-linked (GlcNAc...) asparagine glycosylation is present at Asn36.

Belongs to the spermadhesin family. Seminal plasma or sperm.

The protein resides in the secreted. Inhibitor of sperm motility. The protein is Seminal plasma sperm motility inhibitor (SPMI) of Sus scrofa (Pig).